Consider the following 554-residue polypeptide: Chaperonin GroEL (554 aa).

ATP contacts are provided by residues 29 to 32 (TLGP), K50, 86 to 90 (DGTTT), G418, and D499. A disordered region spans residues 528 to 554 (HEEDNNTNRSGGGVGGGHHGGMGGMDF). Residues 537–554 (SGGGVGGGHHGGMGGMDF) show a composition bias toward gly residues.

It belongs to the chaperonin (HSP60) family. Forms a cylinder of 14 subunits composed of two heptameric rings stacked back-to-back. Interacts with the co-chaperonin GroES.

The protein resides in the cytoplasm. The enzyme catalyses ATP + H2O + a folded polypeptide = ADP + phosphate + an unfolded polypeptide.. Its function is as follows. Together with its co-chaperonin GroES, plays an essential role in assisting protein folding. The GroEL-GroES system forms a nano-cage that allows encapsulation of the non-native substrate proteins and provides a physical environment optimized to promote and accelerate protein folding. The chain is Chaperonin GroEL from Orientia tsutsugamushi (strain Boryong) (Rickettsia tsutsugamushi).